We begin with the raw amino-acid sequence, 260 residues long: uncharacterized protein (260 aa).

Positions Ile214–Glu252 form a coiled coil.

This is an uncharacterized protein from Bacillus subtilis (strain 168).